Here is a 391-residue protein sequence, read N- to C-terminus: 5-amino-6-(D-ribitylamino)uracil--L-tyrosine 4-hydroxyphenyl transferase (391 aa).

The Radical SAM core domain occupies 55–302 (VTYVINRNIN…GAVARIYLGN (248 aa)). The [4Fe-4S] cluster site is built by Cys-69, Cys-73, and Cys-76.

Belongs to the radical SAM superfamily. CofH family. As to quaternary structure, consists of two subunits, CofG and CofH. It depends on [4Fe-4S] cluster as a cofactor.

The catalysed reaction is 5-amino-6-(D-ribitylamino)uracil + L-tyrosine + S-adenosyl-L-methionine = 5-amino-5-(4-hydroxybenzyl)-6-(D-ribitylimino)-5,6-dihydrouracil + 2-iminoacetate + 5'-deoxyadenosine + L-methionine + H(+). It participates in cofactor biosynthesis; coenzyme F0 biosynthesis. Its function is as follows. Catalyzes the radical-mediated synthesis of 5-amino-5-(4-hydroxybenzyl)-6-(D-ribitylimino)-5,6-dihydrouracil from 5-amino-6-(D-ribitylamino)uracil and L-tyrosine. This is 5-amino-6-(D-ribitylamino)uracil--L-tyrosine 4-hydroxyphenyl transferase from Trichormus variabilis (strain ATCC 29413 / PCC 7937) (Anabaena variabilis).